Reading from the N-terminus, the 21-residue chain is Dahlein-5.5 (21 aa).

Expressed by the skin dorsal glands.

The protein resides in the secreted. Its function is as follows. Has no antimicrobial activity. Strongly inhibits the formation of NO by neuronal nitric oxide synthase at micromolar concentrations. The sequence is that of Dahlein-5.5 from Ranoidea dahlii (Dahl's aquatic frog).